We begin with the raw amino-acid sequence, 250 residues long: MTPDEPKETHFGFRTVAEKDKAGLVHGVFSRVASRYDVMNDLMSGGVHRIWKTAMMDWLAPRDGQHLLDVAGGTGDIAFRFLDRAPGARVTVCDMTESMLVEGRKRAEAGKQADRLAWVTGDAMALPFADDSFDRYTISFGIRNVTRIPDALAEARRVLRPGGRLMVLEFSQMPVPMLQWLYDRYSFNVIPVMGQIVANDRDSYQYLVESIRKFPDQETFATMIREAGFGRVQWRNLSMGIAALHSGWKL.

S-adenosyl-L-methionine contacts are provided by residues Thr-74, Asp-94, 122–123, and Ser-139; that span reads DA.

This sequence belongs to the class I-like SAM-binding methyltransferase superfamily. MenG/UbiE family.

It catalyses the reaction a 2-demethylmenaquinol + S-adenosyl-L-methionine = a menaquinol + S-adenosyl-L-homocysteine + H(+). The catalysed reaction is a 2-methoxy-6-(all-trans-polyprenyl)benzene-1,4-diol + S-adenosyl-L-methionine = a 5-methoxy-2-methyl-3-(all-trans-polyprenyl)benzene-1,4-diol + S-adenosyl-L-homocysteine + H(+). It participates in quinol/quinone metabolism; menaquinone biosynthesis; menaquinol from 1,4-dihydroxy-2-naphthoate: step 2/2. It functions in the pathway cofactor biosynthesis; ubiquinone biosynthesis. In terms of biological role, methyltransferase required for the conversion of demethylmenaquinol (DMKH2) to menaquinol (MKH2) and the conversion of 2-polyprenyl-6-methoxy-1,4-benzoquinol (DDMQH2) to 2-polyprenyl-3-methyl-6-methoxy-1,4-benzoquinol (DMQH2). The protein is Ubiquinone/menaquinone biosynthesis C-methyltransferase UbiE of Paracoccus denitrificans (strain Pd 1222).